A 59-amino-acid chain; its full sequence is Large ribosomal subunit protein bL32 (59 aa).

Belongs to the bacterial ribosomal protein bL32 family.

This chain is Large ribosomal subunit protein bL32, found in Polynucleobacter necessarius subsp. necessarius (strain STIR1).